A 108-amino-acid polypeptide reads, in one-letter code: uncharacterized protein (108 aa).

Positions 39 to 68 are enriched in low complexity; the sequence is GLRSRSGTGSGNSRNGLKESGGSRSGPGKP. Residues 39–95 are disordered; that stretch reads GLRSRSGTGSGNSRNGLKESGGSRSGPGKPRGNRKSSRRIRPRPTSEKPRGYWRSSW. Residues 69–80 are compositionally biased toward basic residues; sequence RGNRKSSRRIRP.

This is an uncharacterized protein from Acidithiobacillus ferridurans.